The primary structure comprises 261 residues: Cytochrome c oxidase subunit 3 (261 aa).

Residues Met1–Pro15 lie on the Mitochondrial matrix side of the membrane. The chain crosses the membrane as a helical span at residues Trp16–Trp34. At Phe35–Leu40 the chain is on the mitochondrial intermembrane side. A helical transmembrane segment spans residues Tyr41–Thr66. Over Phe67–Thr72 the chain is Mitochondrial matrix. A helical membrane pass occupies residues Pro73 to Ser105. Topologically, residues Leu106–Glu128 are mitochondrial intermembrane. Residues Val129–Thr152 traverse the membrane as a helical segment. Topologically, residues Glu153 to Asn155 are mitochondrial matrix. A helical transmembrane segment spans residues Arg156–Glu183. Residues Ala184–Asp190 are Mitochondrial intermembrane-facing. Residues Gly191–Ile223 traverse the membrane as a helical segment. At Lys224 to His232 the chain is on the mitochondrial matrix side. The chain crosses the membrane as a helical span at residues Phe233–Ile256. Over Tyr257–Ser261 the chain is Mitochondrial intermembrane.

Belongs to the cytochrome c oxidase subunit 3 family. Component of the cytochrome c oxidase (complex IV, CIV), a multisubunit enzyme composed of 14 subunits. The complex is composed of a catalytic core of 3 subunits MT-CO1, MT-CO2 and MT-CO3, encoded in the mitochondrial DNA, and 11 supernumerary subunits COX4I, COX5A, COX5B, COX6A, COX6B, COX6C, COX7A, COX7B, COX7C, COX8 and NDUFA4, which are encoded in the nuclear genome. The complex exists as a monomer or a dimer and forms supercomplexes (SCs) in the inner mitochondrial membrane with NADH-ubiquinone oxidoreductase (complex I, CI) and ubiquinol-cytochrome c oxidoreductase (cytochrome b-c1 complex, complex III, CIII), resulting in different assemblies (supercomplex SCI(1)III(2)IV(1) and megacomplex MCI(2)III(2)IV(2)).

The protein resides in the mitochondrion inner membrane. It catalyses the reaction 4 Fe(II)-[cytochrome c] + O2 + 8 H(+)(in) = 4 Fe(III)-[cytochrome c] + 2 H2O + 4 H(+)(out). Component of the cytochrome c oxidase, the last enzyme in the mitochondrial electron transport chain which drives oxidative phosphorylation. The respiratory chain contains 3 multisubunit complexes succinate dehydrogenase (complex II, CII), ubiquinol-cytochrome c oxidoreductase (cytochrome b-c1 complex, complex III, CIII) and cytochrome c oxidase (complex IV, CIV), that cooperate to transfer electrons derived from NADH and succinate to molecular oxygen, creating an electrochemical gradient over the inner membrane that drives transmembrane transport and the ATP synthase. Cytochrome c oxidase is the component of the respiratory chain that catalyzes the reduction of oxygen to water. Electrons originating from reduced cytochrome c in the intermembrane space (IMS) are transferred via the dinuclear copper A center (CU(A)) of subunit 2 and heme A of subunit 1 to the active site in subunit 1, a binuclear center (BNC) formed by heme A3 and copper B (CU(B)). The BNC reduces molecular oxygen to 2 water molecules using 4 electrons from cytochrome c in the IMS and 4 protons from the mitochondrial matrix. In Struthio camelus (Common ostrich), this protein is Cytochrome c oxidase subunit 3 (MT-CO3).